A 323-amino-acid chain; its full sequence is ADP/ATP translocase 4 (323 aa).

Residues 1–23 lie on the Mitochondrial intermembrane side of the membrane; sequence MQREPPKRKQEKKVEKGLFDATS. The Solcar 1 repeat unit spans residues 22–114; sequence TSFGKDLLAG…FAFKDKYKQL (93 aa). Residues 24-53 form a helical membrane-spanning segment; it reads FGKDLLAGGVAAAVSKTTVAPIERVKLLLQ. The Mitochondrial matrix segment spans residues 54–90; the sequence is VQASSKQISPEAQYKGIVDCLVRIPREQGFLSYWRGN. The helical transmembrane segment at 91-115 threads the bilayer; sequence LANVIRYFPTQALNFAFKDKYKQLF. The ADP site is built by R96 and K108. The Mitochondrial intermembrane portion of the chain corresponds to 116-125; that stretch reads MSGVNKEKQF. Residues 126-146 traverse the membrane as a helical segment; sequence WRWFLANLASGGAAGATSLCV. 2 Solcar repeats span residues 127–217 and 224–311; these read RWFL…VKGL and THFL…IKDL. The Mitochondrial matrix portion of the chain corresponds to 147 to 194; it reads VYPLDFARTRLGADIGKGPEERQFKGLGDCIMKIAKSDGIVGLYQGFG. Residues 195–215 form a helical membrane-spanning segment; sequence VSVQGIIVYRASYFGAYDTVK. Over 216–226 the chain is Mitochondrial intermembrane; that stretch reads GLLPKPKETHF. Residues 227–247 form a helical membrane-spanning segment; sequence LVSFFIAQVVTTCSGILSYPF. Over 248–287 the chain is Mitochondrial matrix; that stretch reads DTVRRRMMMQSGEAERQYKGTLDCFMKIYQQEGIGAFFRG. Residue R251 coordinates ADP. Positions 251–256 are important for transport activity; the sequence is RRRMMM. The Nucleotide carrier signature motif motif lies at 251-256; it reads RRRMMM. The helical transmembrane segment at 288–305 threads the bilayer; that stretch reads AFSNILRGTGGALVLVLY. Over 306–323 the chain is Mitochondrial intermembrane; it reads DKIKDLLNIDIGGSSSGD.

The protein belongs to the mitochondrial carrier (TC 2.A.29) family. As to quaternary structure, monomer.

The protein resides in the mitochondrion inner membrane. It localises to the membrane. It is found in the cell projection. The protein localises to the cilium. Its subcellular location is the flagellum membrane. The catalysed reaction is ADP(in) + ATP(out) = ADP(out) + ATP(in). It catalyses the reaction dATP(out) + ADP(in) = dATP(in) + ADP(out). It carries out the reaction dADP(in) + ADP(out) = dADP(out) + ADP(in). The enzyme catalyses H(+)(in) = H(+)(out). The matrix-open state (m-state) is inhibited by the membrane-permeable bongkrekic acid (BKA). The cytoplasmic-open state (c-state) is inhibited by the membrane-impermeable toxic inhibitor carboxyatractyloside (CATR). Proton transporter activity is inhibited by ADP:ATP antiporter activity. Functionally, ADP:ATP antiporter that mediates import of ADP into the mitochondrial matrix for ATP synthesis, and export of ATP out to fuel the cell. Cycles between the cytoplasmic-open state (c-state) and the matrix-open state (m-state): operates by the alternating access mechanism with a single substrate-binding site intermittently exposed to either the cytosolic (c-state) or matrix (m-state) side of the inner mitochondrial membrane. Specifically required during spermatogenesis, probably to mediate ADP:ATP exchange in spermatocytes. Large ATP supplies from mitochondria may be critical for normal progression of spermatogenesis during early stages of meiotic prophase I, including DNA double-strand break repair and chromosomal synapsis. In addition to its ADP:ATP antiporter activity, also involved in mitochondrial uncoupling and mitochondrial permeability transition pore (mPTP) activity. Plays a role in mitochondrial uncoupling by acting as a proton transporter: proton transport uncouples the proton flows via the electron transport chain and ATP synthase to reduce the efficiency of ATP production and cause mitochondrial thermogenesis. Proton transporter activity is inhibited by ADP:ATP antiporter activity, suggesting that SLC25A31/ANT4 acts as a master regulator of mitochondrial energy output by maintaining a delicate balance between ATP production (ADP:ATP antiporter activity) and thermogenesis (proton transporter activity). Proton transporter activity requires free fatty acids as cofactor, but does not transport it. Among nucleotides, may also exchange ADP for dATP and dADP. Also plays a key role in mPTP opening, a non-specific pore that enables free passage of the mitochondrial membranes to solutes of up to 1.5 kDa, and which contributes to cell death. It is however unclear if SLC25A31/ANT4 constitutes a pore-forming component of mPTP or regulates it. This chain is ADP/ATP translocase 4, found in Bos taurus (Bovine).